The primary structure comprises 521 residues: Probable feruloyl esterase B (521 aa).

The first 17 residues, 1–17 (MKVSSLLSVALPGAALA), serve as a signal peptide directing secretion. 2 disulfides stabilise this stretch: C26–C72 and C61–C111. N-linked (GlcNAc...) asparagine glycans are attached at residues N37, N51, N77, N95, N144, and N177. 3 disulfide bridges follow: C184–C438, C253–C270, and C279–C288. Catalysis depends on S185, which acts as the Acyl-ester intermediate. Residues D254, D257, A259, D261, and I263 each coordinate Ca(2+). N-linked (GlcNAc...) asparagine glycans are attached at residues N284, N347, N352, and N378. Residues D397 and H437 each act as charge relay system in the active site. N-linked (GlcNAc...) asparagine glycans are attached at residues N488 and N511. C498 and C520 are joined by a disulfide.

This sequence belongs to the tannase family.

It localises to the secreted. It catalyses the reaction feruloyl-polysaccharide + H2O = ferulate + polysaccharide.. Functionally, involved in degradation of plant cell walls. Hydrolyzes the feruloyl-arabinose ester bond in arabinoxylans as well as the feruloyl-galactose and feruloyl-arabinose ester bonds in pectin. The protein is Probable feruloyl esterase B (faeB) of Aspergillus niger (strain ATCC MYA-4892 / CBS 513.88 / FGSC A1513).